The chain runs to 278 residues: MGIRKYKPTTPGRRGASVSDFAEITRSTPEKSLVRPLHGKGGRNAHGRITTRHKGGGHKRAYRVIDFRRHDKDGVNAKVAHIEYDPNRTANIALLHYLDGEKRYIIAPQGLKQGDVIESGANADIKPGNNLPLRNIPAGTVIHAVELRPGGGAKLARSAGVSIQLLGKEGTYAALRMPSGEIRRVDVRCRATVGEVGNAEQSNINWGKAGRMRWKGKRPTVRGVVMNPVDHPHGGGEGKTSGGRHPVSPWGKPEGRTRKPNKPSDKLIVRRRRTGKKR.

Disordered stretches follow at residues 1-20, 25-58, and 223-278; these read MGIR…SVSD, TRST…GGGH, and GVVM…GKKR. Positions 37-58 are enriched in basic residues; that stretch reads LHGKGGRNAHGRITTRHKGGGH. Residues 253-268 show a composition bias toward basic and acidic residues; that stretch reads PEGRTRKPNKPSDKLI. The span at 269-278 shows a compositional bias: basic residues; it reads VRRRRTGKKR.

Belongs to the universal ribosomal protein uL2 family. Part of the 50S ribosomal subunit. Forms a bridge to the 30S subunit in the 70S ribosome.

One of the primary rRNA binding proteins. Required for association of the 30S and 50S subunits to form the 70S ribosome, for tRNA binding and peptide bond formation. It has been suggested to have peptidyltransferase activity; this is somewhat controversial. Makes several contacts with the 16S rRNA in the 70S ribosome. This Mycolicibacterium smegmatis (strain ATCC 700084 / mc(2)155) (Mycobacterium smegmatis) protein is Large ribosomal subunit protein uL2.